The primary structure comprises 32 residues: Cytochrome b6-f complex subunit 7 (32 aa).

The helical transmembrane segment at 9 to 27 (AVLSSVLVLVGLAIGFLLL) threads the bilayer.

The protein belongs to the PetM family. In terms of assembly, the 4 large subunits of the cytochrome b6-f complex are cytochrome b6, subunit IV (17 kDa polypeptide, PetD), cytochrome f and the Rieske protein, while the 4 small subunits are PetG, PetL, PetM and PetN. The complex functions as a dimer.

Its subcellular location is the plastid. The protein resides in the chloroplast thylakoid membrane. Component of the cytochrome b6-f complex, which mediates electron transfer between photosystem II (PSII) and photosystem I (PSI), cyclic electron flow around PSI, and state transitions. The sequence is that of Cytochrome b6-f complex subunit 7 from Pyropia yezoensis (Susabi-nori).